Here is a 281-residue protein sequence, read N- to C-terminus: Large ribosomal subunit protein uL2 (281 aa).

The segment at 208–281 (AGRSRYAGQR…RGRKRGPHTR (74 aa)) is disordered. The span at 254–281 (TVGKKTRSHKARSNKFIVRGRKRGPHTR) shows a compositional bias: basic residues.

This sequence belongs to the universal ribosomal protein uL2 family. In terms of assembly, part of the 50S ribosomal subunit. Forms a bridge to the 30S subunit in the 70S ribosome.

In terms of biological role, one of the primary rRNA binding proteins. Required for association of the 30S and 50S subunits to form the 70S ribosome, for tRNA binding and peptide bond formation. It has been suggested to have peptidyltransferase activity; this is somewhat controversial. Makes several contacts with the 16S rRNA in the 70S ribosome. This is Large ribosomal subunit protein uL2 from Limosilactobacillus fermentum (strain NBRC 3956 / LMG 18251) (Lactobacillus fermentum).